Here is a 218-residue protein sequence, read N- to C-terminus: 2-C-methyl-D-erythritol 4-phosphate cytidylyltransferase (218 aa).

This sequence belongs to the IspD/TarI cytidylyltransferase family. IspD subfamily.

It catalyses the reaction 2-C-methyl-D-erythritol 4-phosphate + CTP + H(+) = 4-CDP-2-C-methyl-D-erythritol + diphosphate. Its pathway is isoprenoid biosynthesis; isopentenyl diphosphate biosynthesis via DXP pathway; isopentenyl diphosphate from 1-deoxy-D-xylulose 5-phosphate: step 2/6. Its function is as follows. Catalyzes the formation of 4-diphosphocytidyl-2-C-methyl-D-erythritol from CTP and 2-C-methyl-D-erythritol 4-phosphate (MEP). The sequence is that of 2-C-methyl-D-erythritol 4-phosphate cytidylyltransferase from Chlamydia muridarum (strain MoPn / Nigg).